We begin with the raw amino-acid sequence, 228 residues long: Cytochrome b5 domain-containing protein 1 (228 aa).

Positions 17–83 constitute a Cytochrome b5 heme-binding domain; it reads RRYFTPAEVA…DPKTRDIRKH (67 aa). Tyrosine 52 and histidine 83 together coordinate heme.

Belongs to the cytochrome b5 family.

It is found in the cytoplasm. The protein resides in the cytoskeleton. Its subcellular location is the cilium axoneme. Radial spoke stalk protein that binds heme under oxidizing conditions. Required for the coordinated beating of multiple cilia maybe by functioning in a redox signaling pathway. The protein is Cytochrome b5 domain-containing protein 1 of Homo sapiens (Human).